Here is a 124-residue protein sequence, read N- to C-terminus: U-scoloptoxin-Er5d (124 aa).

The signal sequence occupies residues 1–22; it reads MKTNCEFPLLCLLIVLVANVEG. The propeptide occupies 23–94; it reads EVEDNELKMV…KRLWRNWERR (72 aa). 3 RLWRNWE repeats span residues 34–40, 61–67, and 86–92; these read RLWRNWE. The residue at position 95 (Q95) is a Pyrrolidone carboxylic acid. The RLWRNWE 4; approximate repeat unit spans residues 107–113; the sequence is ELWRNWE. Positions 112–124 are excised as a propeptide; it reads WEDLKRRQVGRFE.

Belongs to the scoloptoxin-08 family. In terms of tissue distribution, expressed by the venom gland.

The protein resides in the secreted. The polypeptide is U-scoloptoxin-Er5d (Ethmostigmus rubripes (Giant centipede)).